Consider the following 310-residue polypeptide: Transcription initiation factor IIB (310 aa).

Tandem repeats lie at residues R126–L209 and R220–Q301.

It belongs to the TFIIB family.

In terms of biological role, stabilizes TBP binding to an archaeal box-A promoter. Also responsible for recruiting RNA polymerase II to the pre-initiation complex (DNA-TBP-TFIIB). The chain is Transcription initiation factor IIB from Pyrodictium occultum.